Reading from the N-terminus, the 379-residue chain is Glutamate 5-kinase (379 aa).

K14 contributes to the ATP binding site. Substrate is bound by residues S54, D141, and N153. ATP contacts are provided by residues 173–174 (TD) and 215–221 (TGGMATK). Positions 280–358 (KGRLLLDIGA…DEIEPLLGYD (79 aa)) constitute a PUA domain.

This sequence belongs to the glutamate 5-kinase family.

It localises to the cytoplasm. It carries out the reaction L-glutamate + ATP = L-glutamyl 5-phosphate + ADP. The protein operates within amino-acid biosynthesis; L-proline biosynthesis; L-glutamate 5-semialdehyde from L-glutamate: step 1/2. Catalyzes the transfer of a phosphate group to glutamate to form L-glutamate 5-phosphate. This chain is Glutamate 5-kinase, found in Shewanella amazonensis (strain ATCC BAA-1098 / SB2B).